Reading from the N-terminus, the 693-residue chain is Translation initiation factor IF-2 (693 aa).

The tr-type G domain maps to 181-349 (PRPPVVTVMG…MILLVAEMNE (169 aa)). A G1 region spans residues 190–197 (GHVDHGKT). Residue 190 to 197 (GHVDHGKT) coordinates GTP. The tract at residues 215–219 (GITQS) is G2. Residues 236-239 (DTPG) form a G3 region. GTP is bound by residues 236 to 240 (DTPGH) and 290 to 293 (NKID). The tract at residues 290–293 (NKID) is G4. Residues 327 to 329 (SAR) form a G5 region.

The protein belongs to the TRAFAC class translation factor GTPase superfamily. Classic translation factor GTPase family. IF-2 subfamily.

The protein resides in the cytoplasm. One of the essential components for the initiation of protein synthesis. Protects formylmethionyl-tRNA from spontaneous hydrolysis and promotes its binding to the 30S ribosomal subunits. Also involved in the hydrolysis of GTP during the formation of the 70S ribosomal complex. This chain is Translation initiation factor IF-2, found in Thermotoga petrophila (strain ATCC BAA-488 / DSM 13995 / JCM 10881 / RKU-1).